The sequence spans 317 residues: MEAVTIVDVAPRDGLQNEPDVLEPATRVELIERLLAAGVPRIEIGSFVNPRQVPQMAGIDQIARMLIERGHNLAARTTNDLFRFTALVPNQRGYELAAAAGLRHVRLVLAASDGLNRANFKRTTAESLIEFSRFALNIRRDGLTFGVAIGAAFGCPFDGYVSPERVRAIAEHAVDIGAGEIILADTTGMAVPTQVAALCRTILDRIPDVTVTLHLHNTRNTGYANAFAAWQVGIRSFDAALGGIGGCPFAPRAVGNIASEDLVHLFNGLGVPTGIDLSALIAASDWLSATLGRPLPALVGKAGPVYPQVVSMAPYLS.

In terms of domain architecture, Pyruvate carboxyltransferase spans 4-281 (VTIVDVAPRD…PTGIDLSALI (278 aa)). R12 contributes to the substrate binding site. A divalent metal cation-binding residues include D13, H214, and H216. C247 is a catalytic residue. N256 serves as a coordination point for a divalent metal cation.

Belongs to the HMG-CoA lyase family. In terms of assembly, homodimer. Requires Mn(2+) as cofactor. Co(2+) serves as cofactor. It depends on Ni(2+) as a cofactor. Mg(2+) is required as a cofactor.

It carries out the reaction (3R)-citramalyl-CoA = pyruvate + acetyl-CoA. Its activity is regulated as follows. Activated by dithioerythritol (DTE) (in vitro). Involved in the glyoxylate assimilation cycle used to regenerate acetyl-CoA and produce pyruvate as universal precursor for biosynthesis. Catalyzes the cleavage of (R)-citramalyl-CoA to yield acetyl-CoA and pyruvate. This chain is (R)-citramalyl-CoA lyase (ccl), found in Chloroflexus aurantiacus (strain ATCC 29366 / DSM 635 / J-10-fl).